We begin with the raw amino-acid sequence, 488 residues long: GTPase Der (488 aa).

2 consecutive EngA-type G domains span residues 3–166 and 199–372; these read PVVA…AEAM and IKLA…DSAT. GTP-binding positions include 9–16, 56–60, 118–121, 205–212, 252–256, and 317–320; these read GRPNVGKS, DTGGI, NKID, GKPNVGKS, DTAGV, and NKWD. The KH-like domain occupies 373 to 457; that stretch reads RRVSTSMLTR…PIQLRFQEGD (85 aa).

Belongs to the TRAFAC class TrmE-Era-EngA-EngB-Septin-like GTPase superfamily. EngA (Der) GTPase family. In terms of assembly, associates with the 50S ribosomal subunit.

Its function is as follows. GTPase that plays an essential role in the late steps of ribosome biogenesis. This Shewanella sp. (strain ANA-3) protein is GTPase Der.